A 90-amino-acid polypeptide reads, in one-letter code: UPF0237 protein NMA1909 (90 aa).

The 79-residue stretch at 5 to 83 (VITVIGKDRV…LDIRMQNEEI (79 aa)) folds into the ACT domain.

The protein belongs to the UPF0237 family.

The polypeptide is UPF0237 protein NMA1909 (Neisseria meningitidis serogroup A / serotype 4A (strain DSM 15465 / Z2491)).